The following is a 201-amino-acid chain: Recombination protein RecR (201 aa).

The segment at 60-75 (CSCCGNVDTIDPCTVC) adopts a C4-type zinc-finger fold. One can recognise a Toprim domain in the interval 83 to 178 (AVIIVVEDVA…RITRLAHGVP (96 aa)).

The protein belongs to the RecR family.

May play a role in DNA repair. It seems to be involved in an RecBC-independent recombinational process of DNA repair. It may act with RecF and RecO. This chain is Recombination protein RecR, found in Rhizobium meliloti (strain 1021) (Ensifer meliloti).